Reading from the N-terminus, the 319-residue chain is Probable deoxyhypusine synthase (319 aa).

Lys-287 functions as the Nucleophile in the catalytic mechanism.

This sequence belongs to the deoxyhypusine synthase family. Requires NAD(+) as cofactor.

The catalysed reaction is [eIF5A protein]-L-lysine + spermidine = [eIF5A protein]-deoxyhypusine + propane-1,3-diamine. It participates in protein modification; eIF5A hypusination. Its function is as follows. Catalyzes the NAD-dependent oxidative cleavage of spermidine and the subsequent transfer of the butylamine moiety of spermidine to the epsilon-amino group of a specific lysine residue of the eIF-5A precursor protein to form the intermediate deoxyhypusine residue. The sequence is that of Probable deoxyhypusine synthase from Ignicoccus hospitalis (strain KIN4/I / DSM 18386 / JCM 14125).